Here is a 400-residue protein sequence, read N- to C-terminus: Sensory histidine kinase/phosphatase NtrB (400 aa).

2 stretches are compositionally biased toward low complexity: residues 1-10 (MARASAAAPL) and 18-27 (RAPSSSYRPV). The segment at 1-27 (MARASAAAPLPRRPARPRAPSSSYRPV) is disordered. The PAS domain maps to 29–99 (PCIDPSVMLN…IEQVQQGRHR (71 aa)). The 219-residue stretch at 163–381 (MLGHEVKNPL…VFKVSLPMFD (219 aa)) folds into the Histidine kinase domain. His-166 bears the Phosphohistidine; by autocatalysis mark.

In terms of processing, autophosphorylated.

Its subcellular location is the cytoplasm. It catalyses the reaction ATP + protein L-histidine = ADP + protein N-phospho-L-histidine.. In terms of biological role, member of the two-component regulatory system NtrB/NtrC, which controls expression of the nitrogen-regulated (ntr) genes in response to nitrogen limitation. Under conditions of nitrogen limitation, NtrB autophosphorylates and transfers the phosphoryl group to NtrC. In the presence of nitrogen, acts as a phosphatase that dephosphorylates and inactivates NtrC. The polypeptide is Sensory histidine kinase/phosphatase NtrB (Azospirillum brasilense).